The following is a 546-amino-acid chain: Chaperonin GroEL (546 aa).

ATP is bound by residues 30 to 33 (TLGP), K51, 87 to 91 (DGTTT), G415, 479 to 481 (NAA), and D495. The segment at 525-546 (PEPKKDMPPMPGGGMGGMGGMY) is disordered. Residues 536-546 (GGGMGGMGGMY) are compositionally biased toward gly residues.

This sequence belongs to the chaperonin (HSP60) family. Forms a cylinder of 14 subunits composed of two heptameric rings stacked back-to-back. Interacts with the co-chaperonin GroES.

The protein localises to the cytoplasm. The enzyme catalyses ATP + H2O + a folded polypeptide = ADP + phosphate + an unfolded polypeptide.. Its function is as follows. Together with its co-chaperonin GroES, plays an essential role in assisting protein folding. The GroEL-GroES system forms a nano-cage that allows encapsulation of the non-native substrate proteins and provides a physical environment optimized to promote and accelerate protein folding. The sequence is that of Chaperonin GroEL from Solidesulfovibrio magneticus (strain ATCC 700980 / DSM 13731 / RS-1) (Desulfovibrio magneticus).